The primary structure comprises 477 residues: Glutamyl-tRNA(Gln) amidotransferase subunit A (477 aa).

Active-site charge relay system residues include Lys71 and Ser146. Catalysis depends on Ser170, which acts as the Acyl-ester intermediate.

Belongs to the amidase family. GatA subfamily. In terms of assembly, heterotrimer of A, B and C subunits.

It catalyses the reaction L-glutamyl-tRNA(Gln) + L-glutamine + ATP + H2O = L-glutaminyl-tRNA(Gln) + L-glutamate + ADP + phosphate + H(+). Allows the formation of correctly charged Gln-tRNA(Gln) through the transamidation of misacylated Glu-tRNA(Gln) in organisms which lack glutaminyl-tRNA synthetase. The reaction takes place in the presence of glutamine and ATP through an activated gamma-phospho-Glu-tRNA(Gln). The sequence is that of Glutamyl-tRNA(Gln) amidotransferase subunit A from Halothermothrix orenii (strain H 168 / OCM 544 / DSM 9562).